A 151-amino-acid polypeptide reads, in one-letter code: U1 small nuclear ribonucleoprotein C (151 aa).

The Matrin-type zinc-finger motif lies at 4–36 (YYCDYCDTYLTHDSPSVRKTHCTGRKHKDNVKF).

It belongs to the U1 small nuclear ribonucleoprotein C family. U1 snRNP is composed of the 7 core Sm proteins B/B', D1, D2, D3, E, F and G that assemble in a heptameric protein ring on the Sm site of the small nuclear RNA to form the core snRNP, and at least 3 U1 snRNP-specific proteins U1-70K, U1-A and U1-C. U1-C interacts with U1 snRNA and the 5' splice-site region of the pre-mRNA.

It is found in the nucleus. Functionally, component of the spliceosomal U1 snRNP, which is essential for recognition of the pre-mRNA 5' splice-site and the subsequent assembly of the spliceosome. U1-C is directly involved in initial 5' splice-site recognition for both constitutive and regulated alternative splicing. The interaction with the 5' splice-site seems to precede base-pairing between the pre-mRNA and the U1 snRNA. Stimulates commitment or early (E) complex formation by stabilizing the base pairing of the 5' end of the U1 snRNA and the 5' splice-site region. In Anopheles darlingi (Mosquito), this protein is U1 small nuclear ribonucleoprotein C.